A 1962-amino-acid chain; its full sequence is Sodium channel protein type 10 subunit alpha (1962 aa).

Residues M1–K125 are Cytoplasmic-facing. A disordered region spans residues Q32–D56. The segment covering A33–R42 has biased composition (basic residues). Residues E43 to L55 are compositionally biased toward basic and acidic residues. One copy of the I repeat lies at F116 to Q414. A helical membrane pass occupies residues V126–Q149. Residues T150–D154 lie on the Extracellular side of the membrane. Residues R155 to A174 traverse the membrane as a helical segment. Residues R175–D187 are Cytoplasmic-facing. The helical transmembrane segment at P188–T206 threads the bilayer. Over A207–S212 the chain is Extracellular. The chain crosses the membrane as a helical; Voltage-sensor span at residues G213–L232. At K233 to D248 the chain is on the cytoplasmic side. A helical transmembrane segment spans residues V249–L272. The Extracellular portion of the chain corresponds to K273–S350. A disulfide bridge connects residues C276 and C328. N-linked (GlcNAc...) asparagine glycosylation is found at N284, N288, N321, and N344. The pore-forming intramembrane region spans F351–L375. Topologically, residues R376–Y382 are extracellular. The helical transmembrane segment at M383–A408 threads the bilayer. The Cytoplasmic segment spans residues Y409–F668. Phosphoserine occurs at positions 450, 453, 476, and 488. Over residues H452–N463 the composition is skewed to polar residues. Disordered stretches follow at residues H452–Q493 and L521–L586. A phosphoserine mark is found at S621 and S624. One copy of the II repeat lies at C656 to Q920. A helical transmembrane segment spans residues G669–M693. Residues E694–A704 are Extracellular-facing. Residues M705–F728 form a helical membrane-spanning segment. The Cytoplasmic segment spans residues D729–K736. Residues R737–A756 traverse the membrane as a helical segment. Over R757–S762 the chain is Extracellular. The chain crosses the membrane as a helical; Voltage-sensor span at residues V763–L782. The Cytoplasmic segment spans residues N783–N798. The chain crosses the membrane as a helical span at residues L799 to G819. Over E820–D843 the chain is Extracellular. N-linked (GlcNAc...) asparagine glycosylation occurs at N828. Residues F844–W864 constitute an intramembrane region (pore-forming). Residues A865–S873 lie on the Extracellular side of the membrane. A disulfide bond links C866 and C875. Residues I874 to L899 form a helical membrane-spanning segment. Residues N900–R1154 lie on the Cytoplasmic side of the membrane. Positions L1015–S1026 are enriched in acidic residues. Residues L1015–L1035 form a disordered region. The stretch at Q1147–L1456 is one III repeat. The helical transmembrane segment at I1155–F1178 threads the bilayer. The Extracellular segment spans residues E1179 to A1191. The helical transmembrane segment at L1192–F1217 threads the bilayer. Topologically, residues K1218–N1223 are cytoplasmic. Residues A1224–L1245 traverse the membrane as a helical segment. Residues Q1246–D1249 are Extracellular-facing. Residues V1250–F1271 traverse the membrane as a helical; Voltage-sensor segment. Residues E1272–N1290 lie on the Cytoplasmic side of the membrane. Residues V1291–I1318 form a helical membrane-spanning segment. 3 N-linked (GlcNAc...) asparagine glycosylation sites follow: N1319, N1335, and N1343. The Extracellular portion of the chain corresponds to N1319–V1360. The segment at residues A1361–A1382 is an intramembrane region (pore-forming). Residues A1383–N1398 lie on the Extracellular side of the membrane. Residues V1399 to I1425 traverse the membrane as a helical segment. At D1426 to D1478 the chain is on the cytoplasmic side. A Phosphoserine; by PKC modification is found at S1458. An IV repeat occupies I1465–Q1764. The chain crosses the membrane as a helical span at residues I1479 to V1502. Residues E1503–K1513 are Extracellular-facing. The helical transmembrane segment at I1514–L1537 threads the bilayer. The Cytoplasmic segment spans residues R1538 to T1543. Residues N1544–L1567 traverse the membrane as a helical segment. At T1568–F1579 the chain is on the extracellular side. The chain crosses the membrane as a helical; Voltage-sensor span at residues R1580–R1601. Over T1602–N1616 the chain is Cytoplasmic. A helical transmembrane segment spans residues I1617–V1639. Over S1640–T1653 the chain is Extracellular. Positions F1654–P1676 form an intramembrane region, pore-forming. Over I1677–V1704 the chain is Extracellular. N1693 is a glycosylation site (N-linked (GlcNAc...) asparagine). A helical transmembrane segment spans residues G1705–L1729. At E1730–P1962 the chain is on the cytoplasmic side. An IQ domain is found at E1858 to P1887. Positions K1914–P1962 are disordered. The segment covering D1928–Q1947 has biased composition (polar residues).

The protein belongs to the sodium channel (TC 1.A.1.10) family. Nav1.8/SCN10A subfamily. The channel consists of an ion conducting pore forming alpha-subunit regulated by one or more associated auxiliary subunits SCN1B, SCN2B and SCN3B; electrophysiological properties may vary depending on the type of the associated beta subunits. Found in a number of complexes with PRX, DYNLT1 and PDZD2. Interacts with proteins such as FSTL1, PRX, DYNLT1, PDZD2, S100A10 and many others. Interacts with NEDD4 and NEDD4L. In terms of processing, ubiquitinated by NEDD4L; which promotes its endocytosis. Post-translationally, phosphorylation at Ser-1458 by PKC in a highly conserved cytoplasmic loop slows inactivation of the sodium channel and reduces peak sodium currents. Lacks the cysteine which covalently binds the conotoxin GVIIJ. This cysteine (position 825) is speculated in other sodium channel subunits alpha to be implied in covalent binding with the sodium channel subunit beta-2 or beta-4. In terms of tissue distribution, expressed in nodose ganglia, but not in cortex, hippocampus, cerebellum, liver, heart and skeletal muscle.

The protein resides in the cell membrane. It catalyses the reaction Na(+)(in) = Na(+)(out). Its function is as follows. Tetrodotoxin-resistant channel that mediates the voltage-dependent sodium ion permeability of excitable membranes. Assuming opened or closed conformations in response to the voltage difference across the membrane, the protein forms a sodium-selective channel through which sodium ions may pass in accordance with their electrochemical gradient. Plays a role in neuropathic pain mechanisms. In Canis lupus familiaris (Dog), this protein is Sodium channel protein type 10 subunit alpha (SCN10A).